The following is a 340-amino-acid chain: GTPase Obg (340 aa).

Residues 1–159 enclose the Obg domain; it reads MDFIDEVKLY…KYVVLKLKVL (159 aa). The region spanning 160–329 is the OBG-type G domain; the sequence is SDVGIIGMPN…LNEKLKKGSS (170 aa). Residues 166 to 173, 191 to 195, 212 to 215, 279 to 282, and 310 to 312 each bind GTP; these read GMPNAGKS, FTTIK, DIPG, NKCD, and GED. Mg(2+) is bound by residues S173 and T193.

Belongs to the TRAFAC class OBG-HflX-like GTPase superfamily. OBG GTPase family. As to quaternary structure, monomer. Mg(2+) serves as cofactor.

Its subcellular location is the cytoplasm. In terms of biological role, an essential GTPase which binds GTP, GDP and possibly (p)ppGpp with moderate affinity, with high nucleotide exchange rates and a fairly low GTP hydrolysis rate. Plays a role in control of the cell cycle, stress response, ribosome biogenesis and in those bacteria that undergo differentiation, in morphogenesis control. The protein is GTPase Obg of Wolbachia sp. subsp. Brugia malayi (strain TRS).